A 409-amino-acid polypeptide reads, in one-letter code: Tryptophan synthase beta chain (409 aa).

Lysine 95 carries the N6-(pyridoxal phosphate)lysine modification.

The protein belongs to the TrpB family. Tetramer of two alpha and two beta chains. Pyridoxal 5'-phosphate is required as a cofactor.

The enzyme catalyses (1S,2R)-1-C-(indol-3-yl)glycerol 3-phosphate + L-serine = D-glyceraldehyde 3-phosphate + L-tryptophan + H2O. It participates in amino-acid biosynthesis; L-tryptophan biosynthesis; L-tryptophan from chorismate: step 5/5. The beta subunit is responsible for the synthesis of L-tryptophan from indole and L-serine. This is Tryptophan synthase beta chain from Pseudomonas savastanoi pv. phaseolicola (Pseudomonas syringae pv. phaseolicola).